We begin with the raw amino-acid sequence, 251 residues long: Regulator of G-protein signaling 7-binding protein B (251 aa).

Residues Met1–Arg43 form a disordered region. The segment covering Ser25–Arg43 has biased composition (basic and acidic residues). 2 S-palmitoyl cysteine lipidation sites follow: Cys246 and Cys247.

Belongs to the RGS7BP/RGS9BP family. Palmitoylated. Undergoes rapid palmitoylation turnover. Palmitoylation regulates the cell membrane and nuclear shuttling and the regulation of GPCR signaling. Upon depalmitoylation, it is targeted from the plasma membrane into the nucleus. GPCR signaling inhibits depalmitoylation and promotes localization to the plasma membrane.

It localises to the nucleus. The protein localises to the cytoplasm. Its subcellular location is the cell membrane. In terms of biological role, regulator of G protein-coupled receptor (GPCR) signaling. Regulatory subunit of the R7-Gbeta5 complexes that acts by controlling the subcellular location of the R7-Gbeta5 complexes. When palmitoylated, it targets the R7-Gbeta5 complexes to the plasma membrane, leading to inhibit G protein alpha subunits. When it is unpalmitoylated, the R7-Gbeta5 complexes undergo a nuclear/cytoplasmic shuttling. The polypeptide is Regulator of G-protein signaling 7-binding protein B (rgs7bpb) (Danio rerio (Zebrafish)).